Consider the following 470-residue polypeptide: Cholesterol 7-desaturase nvd 1 (470 aa).

A helical membrane pass occupies residues 67–87 (LALCIAGFSVLMYFLYVLVFV). Positions 136 to 238 (FRLVDSQQLE…CREVNKAIFV (103 aa)) constitute a Rieske domain. The [2Fe-2S] cluster site is built by Cys-176, His-178, Cys-196, and His-199.

This sequence belongs to the cholesterol 7-desaturase family. The cofactor is [2Fe-2S] cluster.

The protein localises to the membrane. The catalysed reaction is cholesterol + NADPH + O2 + H(+) = 7-dehydrocholesterol + NADP(+) + 2 H2O. It carries out the reaction cholesterol + NADH + O2 + H(+) = 7-dehydrocholesterol + NAD(+) + 2 H2O. It functions in the pathway steroid hormone biosynthesis; dafachronic acid biosynthesis. Functionally, catalyzes the production of 7-dehydrocholesterol (7-DHC or cholesta-5,7-dien-3beta-ol) by inserting a double bond (desaturating) at the C7-C8 single bond of cholesterol. Essential regulator of steroid biosynthesis as this reaction is the first step in the synthesis of the steroid hormone Delta(7)-dafachronic acid. The protein is Cholesterol 7-desaturase nvd 1 of Ciona intestinalis (Transparent sea squirt).